The following is a 337-amino-acid chain: MITLGEYIIKKQHESPEATGELSSILGAIRLATKVVNRDINKAGLVDIIGATGVENVQGEVQQKMDLYANDVFKAALEARGEVCGVASEEEDEFVSFNDQRCINSKYVVLMDPLDGSSNIDVNVSVGTIFSIYRRISEPGKPAILEDFLQPGTEQVAAGYVIYGSSTMLVYTTGYGTHGFTCDPSLGTFYLSHENMKIPDNGSIYSINEGNYLKFPQGVKKYLKYCQEIDGPTNRPYTSRYIGSLVSDFHRNLLKGGIYIYPSTASAPKGKLRLLYECNPMAFIMEQAGGRATDGFNRRIMELTPTELHQRVPFFCGSSKMVDKVEAMMEEYSSEEK.

Mg(2+) is bound by residues E89, D112, L114, and D115. Substrate is bound by residues 115–118 (DGSS), N208, Y241, and K271. E277 is a Mg(2+) binding site.

Belongs to the FBPase class 1 family. In terms of assembly, homotetramer. The cofactor is Mg(2+).

It is found in the cytoplasm. It catalyses the reaction beta-D-fructose 1,6-bisphosphate + H2O = beta-D-fructose 6-phosphate + phosphate. Its pathway is carbohydrate biosynthesis; gluconeogenesis. The chain is Fructose-1,6-bisphosphatase class 1 from Psychromonas ingrahamii (strain DSM 17664 / CCUG 51855 / 37).